A 210-amino-acid polypeptide reads, in one-letter code: DNA-directed RNA polymerases I, II, and III subunit RPABC1 (210 aa).

Methionine 1 is subject to N-acetylmethionine. A Glycyl lysine isopeptide (Lys-Gly) (interchain with G-Cter in SUMO2) cross-link involves residue lysine 81.

It belongs to the archaeal Rpo5/eukaryotic RPB5 RNA polymerase subunit family. As to quaternary structure, component of the RNA polymerase I (Pol I), RNA polymerase II (Pol II) and RNA polymerase III (Pol III) complexes consisting of at least 13, 12 and 17 subunits, respectively. Pol I complex consists of a ten-subunit catalytic core composed of POLR1A/RPA1, POLR1B/RPA2, POLR1C/RPAC1, POLR1D/RPAC2, POLR1H/RPA12, POLR2E/RPABC1, POLR2F/RPABC2, POLR2H/RPABC3, POLR2K/RPABC4 and POLR2L/RPABC5; a mobile stalk subunit POLR1F/RPA43 protruding from the core and additional subunits homologous to general transcription factors POLR1E/RPA49 and POLR1G/RPA34. Part of Pol I pre-initiation complex (PIC), in which Pol I core assembles with RRN3 and promoter-bound UTBF and SL1/TIF-IB complex. Pol II complex contains a ten-subunit catalytic core composed of POLR2A/RPB1, POLR2B/RPB2, POLR2C/RPB3, POLR2I/RPB9, POLR2J/RPB11, POLR2E/RPABC1, POLR2F/RPABC2, POLR2H/RPABC3, POLR2K/RPABC4 and POLR2L/RPABC5 and a mobile stalk composed of two subunits POLR2D/RPB4 and POLR2G/RPB7. Part of Pol II(G) complex, in which Pol II core associates with an additional subunit POLR2M; unlike conventional Pol II, Pol II(G) functions as a transcriptional repressor. Part of TBP-based Pol II pre-initiation complex (PIC), in which Pol II core assembles with general transcription factors and other specific initiation factors including GTF2E1, GTF2E2, GTF2F1, GTF2F2, TCEA1, ERCC2, ERCC3, GTF2H2, GTF2H3, GTF2H4, GTF2H5, GTF2A1, GTF2A2, GTF2B and TBP; this large multi-subunit PIC complex mediates DNA unwinding and targets Pol II core to the transcription start site where the first phosphodiester bond forms. In Pol II complex, this subunit is present in 2-fold molar excess over the other subunits. Pol III complex consists of a ten-subunit catalytic core composed of POLR3A/RPC1, POLR3B/RPC2, POLR1C/RPAC1, POLR1D/RPAC2, POLR3K/RPC10, POLR2E/RPABC1, POLR2F/RPABC2, POLR2H/RPABC3, POLR2K/RPABC4 and POLR2L/RPABC5; a mobile stalk composed of two subunits POLR3H/RPC8 and CRCP/RPC9, protruding from the core and functioning primarily in transcription initiation; and additional subunits homologous to general transcription factors of the RNA polymerase II machinery, POLR3C/RPC3-POLR3F/RPC6-POLR3G/RPC7 heterotrimer required for transcription initiation and POLR3D/RPC4-POLR3E/RPC5 heterodimer involved in both transcription initiation and termination. Component of the PAQosome complex which is responsible for the biogenesis of several protein complexes and which consists of R2TP complex members RUVBL1, RUVBL2, RPAP3 and PIH1D1, URI complex members PFDN2, PFDN6, PDRG1, UXT and URI1 as well as ASDURF, POLR2E and DNAAF10/WDR92. Interacts with URI1.

Its subcellular location is the nucleus. The protein resides in the nucleolus. In terms of biological role, DNA-dependent RNA polymerase catalyzes the transcription of DNA into RNA using the four ribonucleoside triphosphates as substrates. Common component of RNA polymerases I, II and III which synthesize ribosomal RNA precursors, mRNA precursors and many functional non-coding RNAs, and small RNAs, such as 5S rRNA and tRNAs, respectively. Pol II is the central component of the basal RNA polymerase II transcription machinery. Pols are composed of mobile elements that move relative to each other. In Pol II, POLR2E/RPABC1 is part of the lower jaw surrounding the central large cleft and thought to grab the incoming DNA template. Seems to be the major component in this process. This is DNA-directed RNA polymerases I, II, and III subunit RPABC1 from Mus musculus (Mouse).